Here is a 187-residue protein sequence, read N- to C-terminus: MTRVYVGNLDPRVTERELEDEFKAFGVLRNVWVARRPPGYAFLEFDDERDALDAISALDRKNGWRVELSHKDKGGRGGGGGRRGGIEDSKCYECGELGHFARECRRGRGSVRRRSPSPRRRRSPDYGYARRSISPRGRRSPPRRRSVTPPRRGRSYSRSPPYRGSRRDSPRRRDSPYGRRSPYANGV.

In terms of domain architecture, RRM spans 2–73; the sequence is TRVYVGNLDP…WRVELSHKDK (72 aa). Disordered stretches follow at residues 68–89 and 105–187; these read LSHK…IEDS and RRGR…ANGV. The CCHC-type zinc finger occupies 89 to 106; the sequence is SKCYECGELGHFARECRR. Residues 107–122 show a composition bias toward basic residues; sequence GRGSVRRRSPSPRRRR. 6 positions are modified to phosphoserine: Ser-123, Ser-132, Ser-134, Ser-140, Ser-146, and Ser-159. Residues 136–155 are compositionally biased toward basic residues; it reads RGRRSPPRRRSVTPPRRGRS. The span at 165-177 shows a compositional bias: basic and acidic residues; sequence SRRDSPRRRDSPY. Over residues 178-187 the composition is skewed to low complexity; the sequence is GRRSPYANGV. Ser-181 is modified (phosphoserine).

Belongs to the splicing factor SR family. RSZ subfamily. Component of the spliceosome. Interacts with SNRNP35, AFC2, CYP59, RS2Z33 and RNU1. Interacts with MOS14. In terms of processing, extensively phosphorylated on serine residues in the RS domain. Phosphorylated by AFC2. As to expression, expressed in roots, leaves, flowers and siliques.

It is found in the nucleus speckle. Probably involved in intron recognition and spliceosome assembly. This Arabidopsis thaliana (Mouse-ear cress) protein is Serine/arginine-rich splicing factor RSZ21 (RSZ21).